Here is a 397-residue protein sequence, read N- to C-terminus: Argininosuccinate synthase (397 aa).

9–17 (AYSGGLDTS) contributes to the ATP binding site. Position 86 (Tyr86) interacts with L-citrulline. Gly116 contributes to the ATP binding site. L-aspartate contacts are provided by Thr118, Asn122, and Asp123. An L-citrulline-binding site is contributed by Asn122. Residues Arg126, Ser174, Glu259, and Tyr271 each coordinate L-citrulline.

The protein belongs to the argininosuccinate synthase family. Type 1 subfamily. In terms of assembly, homotetramer.

It localises to the cytoplasm. The catalysed reaction is L-citrulline + L-aspartate + ATP = 2-(N(omega)-L-arginino)succinate + AMP + diphosphate + H(+). It functions in the pathway amino-acid biosynthesis; L-arginine biosynthesis; L-arginine from L-ornithine and carbamoyl phosphate: step 2/3. This Lactococcus lactis subsp. cremoris (strain MG1363) protein is Argininosuccinate synthase.